Consider the following 486-residue polypeptide: 3-dehydroshikimate dehydratase (486 aa).

It carries out the reaction 3-dehydroshikimate = 3,4-dihydroxybenzoate + H2O. Its pathway is aromatic compound metabolism; 3,4-dihydroxybenzoate biosynthesis; 3,4-dihydroxybenzoate from 3-dehydroquinate: step 2/2. Its function is as follows. Converts dehydroshikimate to protocatechuate. This is 3-dehydroshikimate dehydratase (quiC) from Acinetobacter baylyi (strain ATCC 33305 / BD413 / ADP1).